Consider the following 206-residue polypeptide: ATP-dependent Clp protease proteolytic subunit (206 aa).

Residue S107 is the Nucleophile of the active site. H132 is a catalytic residue.

The protein belongs to the peptidase S14 family. In terms of assembly, fourteen ClpP subunits assemble into 2 heptameric rings which stack back to back to give a disk-like structure with a central cavity, resembling the structure of eukaryotic proteasomes.

Its subcellular location is the cytoplasm. It carries out the reaction Hydrolysis of proteins to small peptides in the presence of ATP and magnesium. alpha-casein is the usual test substrate. In the absence of ATP, only oligopeptides shorter than five residues are hydrolyzed (such as succinyl-Leu-Tyr-|-NHMec, and Leu-Tyr-Leu-|-Tyr-Trp, in which cleavage of the -Tyr-|-Leu- and -Tyr-|-Trp bonds also occurs).. Functionally, cleaves peptides in various proteins in a process that requires ATP hydrolysis. Has a chymotrypsin-like activity. Plays a major role in the degradation of misfolded proteins. This is ATP-dependent Clp protease proteolytic subunit from Idiomarina loihiensis (strain ATCC BAA-735 / DSM 15497 / L2-TR).